We begin with the raw amino-acid sequence, 234 residues long: MRLVQLSRHSIAFPSPEGALREPNGLLALGGDLSPARLLMAYQRGIFPWFSPGAPILWWSPDPRAVLWPESLHISRSMKRFHKRSPYRVTMNYAFGQVIEGCASDREEGTWITRGVVEAYHRLHELGHAHSIEVWHEDELVGGMYGVAQGTLFCGESMFSRMENASKTALLVFCEEFISHGGKLIDCQVLNDHTASLGACEIPRRDYLNYLNQMRLGRLPNNFWVPRCLFSPQK.

This sequence belongs to the L/F-transferase family.

It is found in the cytoplasm. It catalyses the reaction N-terminal L-lysyl-[protein] + L-leucyl-tRNA(Leu) = N-terminal L-leucyl-L-lysyl-[protein] + tRNA(Leu) + H(+). It carries out the reaction N-terminal L-arginyl-[protein] + L-leucyl-tRNA(Leu) = N-terminal L-leucyl-L-arginyl-[protein] + tRNA(Leu) + H(+). The catalysed reaction is L-phenylalanyl-tRNA(Phe) + an N-terminal L-alpha-aminoacyl-[protein] = an N-terminal L-phenylalanyl-L-alpha-aminoacyl-[protein] + tRNA(Phe). Functions in the N-end rule pathway of protein degradation where it conjugates Leu, Phe and, less efficiently, Met from aminoacyl-tRNAs to the N-termini of proteins containing an N-terminal arginine or lysine. In Shigella sonnei (strain Ss046), this protein is Leucyl/phenylalanyl-tRNA--protein transferase.